We begin with the raw amino-acid sequence, 417 residues long: Queuine tRNA-ribosyltransferase accessory subunit 2 (417 aa).

Residues cysteine 324, cysteine 326, cysteine 329, and histidine 355 each contribute to the Zn(2+) site.

The protein belongs to the queuine tRNA-ribosyltransferase family. QTRT2 subfamily. Heterodimer of a catalytic subunit and an accessory subunit. Zn(2+) is required as a cofactor.

Its subcellular location is the cytoplasm. Its function is as follows. Non-catalytic subunit of the queuine tRNA-ribosyltransferase (TGT) that catalyzes the base-exchange of a guanine (G) residue with queuine (Q) at position 34 (anticodon wobble position) in tRNAs with GU(N) anticodons (tRNA-Asp, -Asn, -His and -Tyr), resulting in the hypermodified nucleoside queuosine (7-(((4,5-cis-dihydroxy-2-cyclopenten-1-yl)amino)methyl)-7-deazaguanosine). This chain is Queuine tRNA-ribosyltransferase accessory subunit 2, found in Drosophila pseudoobscura pseudoobscura (Fruit fly).